Consider the following 325-residue polypeptide: Casein kinase I isoform alpha (325 aa).

Ala-2 carries the post-translational modification N-acetylalanine. At Ser-4 the chain carries Phosphoserine. Position 8 is an N6-acetyllysine (Lys-8). The region spanning 17 to 285 (YKLVRKIGSG…YLRQLFRILF (269 aa)) is the Protein kinase domain. Residues 23 to 31 (IGSGSFGDI) and Lys-46 each bind ATP. Asp-136 acts as the Proton acceptor in catalysis.

This sequence belongs to the protein kinase superfamily. CK1 Ser/Thr protein kinase family. Casein kinase I subfamily. Interacts with the Axin complex. Interacts with TUT1, leading to TUT1 phosphorylation. Interacts with FAM83A, FAM83B, FAM83C, FAM83D, FAM83E, FAM83F, FAM83G and FAM83H (via DUF1669). Interaction with FAM83H recruits CSNK1A1 to keratin filaments. Phosphorylated by MTOR in response to mitogenic stimulation, leading to its activation.

Its subcellular location is the cytoplasm. The protein localises to the cytoskeleton. The protein resides in the microtubule organizing center. It localises to the centrosome. It is found in the chromosome. Its subcellular location is the centromere. The protein localises to the kinetochore. The protein resides in the nucleus speckle. It localises to the cilium basal body. It is found in the spindle. It catalyses the reaction L-seryl-[protein] + ATP = O-phospho-L-seryl-[protein] + ADP + H(+). The catalysed reaction is L-threonyl-[protein] + ATP = O-phospho-L-threonyl-[protein] + ADP + H(+). Its function is as follows. Casein kinases are operationally defined by their preferential utilization of acidic proteins such as caseins as substrates. Can phosphorylate a large number of proteins. Participates in Wnt signaling. Phosphorylates CTNNB1 at 'Ser-45'. May phosphorylate PER1 and PER2. May play a role in segregating chromosomes during mitosis. May play a role in keratin cytoskeleton disassembly and thereby, it may regulate epithelial cell migration. Acts as a positive regulator of mTORC1 and mTORC2 signaling in response to nutrients by mediating phosphorylation of DEPTOR inhibitor. Acts as an inhibitor of NLRP3 inflammasome assembly by mediating phosphorylation of NLRP3. The chain is Casein kinase I isoform alpha (CSNK1A1) from Oryctolagus cuniculus (Rabbit).